The sequence spans 444 residues: Glutamyl-tRNA reductase (444 aa).

Substrate-binding positions include 49-52 (TCNR), Ser-109, 114-116 (ETQ), and Gln-120. Cys-50 serves as the catalytic Nucleophile. 189 to 194 (GAGKMG) lines the NADP(+) pocket.

This sequence belongs to the glutamyl-tRNA reductase family. Homodimer.

It catalyses the reaction (S)-4-amino-5-oxopentanoate + tRNA(Glu) + NADP(+) = L-glutamyl-tRNA(Glu) + NADPH + H(+). It participates in porphyrin-containing compound metabolism; protoporphyrin-IX biosynthesis; 5-aminolevulinate from L-glutamyl-tRNA(Glu): step 1/2. Catalyzes the NADPH-dependent reduction of glutamyl-tRNA(Glu) to glutamate 1-semialdehyde (GSA). This Bacillus cereus (strain ZK / E33L) protein is Glutamyl-tRNA reductase.